We begin with the raw amino-acid sequence, 191 residues long: MQYDIASIIQGYAQGYFLMADDNDCLGWYGSRDRTLIPLDERFRYPKSLQRVLNQERFTVAINRDFAAVVAGCANRESTWISQELQEIYWLLHQTGYAYSFETWQGEELAGGILGIVIGGAFIGESMFYRIPEGSKVAMVKLVERLRQREFVMFDAQMMNPHLERFGAYRIKDKEYKTLLEKALLSSSTLI.

It belongs to the L/F-transferase family.

It is found in the cytoplasm. It catalyses the reaction N-terminal L-lysyl-[protein] + L-leucyl-tRNA(Leu) = N-terminal L-leucyl-L-lysyl-[protein] + tRNA(Leu) + H(+). It carries out the reaction N-terminal L-arginyl-[protein] + L-leucyl-tRNA(Leu) = N-terminal L-leucyl-L-arginyl-[protein] + tRNA(Leu) + H(+). The enzyme catalyses L-phenylalanyl-tRNA(Phe) + an N-terminal L-alpha-aminoacyl-[protein] = an N-terminal L-phenylalanyl-L-alpha-aminoacyl-[protein] + tRNA(Phe). Functionally, functions in the N-end rule pathway of protein degradation where it conjugates Leu, Phe and, less efficiently, Met from aminoacyl-tRNAs to the N-termini of proteins containing an N-terminal arginine or lysine. This Trichormus variabilis (strain ATCC 29413 / PCC 7937) (Anabaena variabilis) protein is Leucyl/phenylalanyl-tRNA--protein transferase.